The sequence spans 162 residues: Photosystem II extrinsic protein V (162 aa).

The signal sequence occupies residues 1–25; that stretch reads MLKRCLWLVVTVLFAWQVFNGTAIA. Heme c-binding residues include Cys-62, Cys-65, His-66, and His-117.

The protein belongs to the cytochrome c family. PsbV subfamily. As to quaternary structure, PSII is composed of 1 copy each of membrane proteins PsbA, PsbB, PsbC, PsbD, PsbE, PsbF, PsbH, PsbI, PsbJ, PsbK, PsbL, PsbM, PsbT, PsbX, PsbY, PsbZ, Psb30/Ycf12, peripheral proteins PsbO, CyanoQ (PsbQ), PsbU, PsbV and a large number of cofactors. It forms dimeric complexes. Heme c serves as cofactor.

The protein resides in the cellular thylakoid membrane. Functionally, one of the extrinsic, lumenal subunits of photosystem II (PSII). PSII is a light-driven water plastoquinone oxidoreductase, using light energy to abstract electrons from H(2)O, generating a proton gradient subsequently used for ATP formation. The extrinsic proteins stabilize the structure of photosystem II oxygen-evolving complex (OEC), the ion environment of oxygen evolution and protect the OEC against heat-induced inactivation. Low-potential cytochrome c that plays a role in the OEC of PSII. The chain is Photosystem II extrinsic protein V from Cyanothece sp. (strain PCC 7425 / ATCC 29141).